Consider the following 477-residue polypeptide: Aspartyl/glutamyl-tRNA(Asn/Gln) amidotransferase subunit B (477 aa).

Belongs to the GatB/GatE family. GatB subfamily. Heterotrimer of A, B and C subunits.

It catalyses the reaction L-glutamyl-tRNA(Gln) + L-glutamine + ATP + H2O = L-glutaminyl-tRNA(Gln) + L-glutamate + ADP + phosphate + H(+). The enzyme catalyses L-aspartyl-tRNA(Asn) + L-glutamine + ATP + H2O = L-asparaginyl-tRNA(Asn) + L-glutamate + ADP + phosphate + 2 H(+). In terms of biological role, allows the formation of correctly charged Asn-tRNA(Asn) or Gln-tRNA(Gln) through the transamidation of misacylated Asp-tRNA(Asn) or Glu-tRNA(Gln) in organisms which lack either or both of asparaginyl-tRNA or glutaminyl-tRNA synthetases. The reaction takes place in the presence of glutamine and ATP through an activated phospho-Asp-tRNA(Asn) or phospho-Glu-tRNA(Gln). The polypeptide is Aspartyl/glutamyl-tRNA(Asn/Gln) amidotransferase subunit B (Legionella pneumophila (strain Lens)).